We begin with the raw amino-acid sequence, 318 residues long: Fe(3+) dicitrate transport system permease protein FecD (318 aa).

Topologically, residues 1-2 (MK) are cytoplasmic. Residues 3 to 23 (IALVIFITLALAGCALLSLHM) form a helical membrane-spanning segment. At 24-55 (GVIPVPWRALLTDWQAGHEHYYVLMEYRLPRL) the chain is on the periplasmic side. Residues 56 to 76 (LLALFVGAALAVAGVLIQGIV) traverse the membrane as a helical segment. Residues 77-105 (RNPLASPDILGVNHAASLASVGALLLMPS) lie on the Cytoplasmic side of the membrane. A helical membrane pass occupies residues 106 to 126 (LPVMVLPLLAFAGGMAGLILL). The Periplasmic segment spans residues 127–137 (KMLAKTHQPMK). Residues 138 to 158 (LALTGVALSACWASLTDYLML) form a helical membrane-spanning segment. Over 159–179 (SRPQDVNNALLWLTGSLWGRD) the chain is Cytoplasmic. Residues 180–200 (WSFVKIAIPLMILFLPLSLSF) traverse the membrane as a helical segment. The Periplasmic portion of the chain corresponds to 201 to 225 (CRDLDLLALGDARATTLGVSVPHTR). Residues 226–246 (FWALLLAVAMTSTGVAACGPI) form a helical membrane-spanning segment. At 247–269 (SFIGLVVPHMMRSITGGRHRRLL) the chain is on the cytoplasmic side. Residues 270-290 (PVSALTGALLLVVADLLARII) traverse the membrane as a helical segment. The Periplasmic segment spans residues 291–294 (HPPL). The helical transmembrane segment at 295-315 (ELPVGVLTAIIGAPWFVWLLV) threads the bilayer. Residues 316-318 (RMR) lie on the Cytoplasmic side of the membrane.

The protein belongs to the binding-protein-dependent transport system permease family. FecCD subfamily. The complex is composed of two ATP-binding proteins (FecE), two transmembrane proteins (FecC and FecD) and a solute-binding protein (FecB). Interacts with FecB.

Its subcellular location is the cell inner membrane. Functionally, part of the ABC transporter complex FecBCDE involved in citrate-dependent Fe(3+) uptake. Probably responsible for the translocation of the substrate across the membrane. This Escherichia coli (strain K12) protein is Fe(3+) dicitrate transport system permease protein FecD.